A 435-amino-acid chain; its full sequence is Trigger factor (435 aa).

Positions Gly-183–Pro-263 constitute a PPIase FKBP-type domain.

Belongs to the FKBP-type PPIase family. Tig subfamily.

The protein localises to the cytoplasm. It carries out the reaction [protein]-peptidylproline (omega=180) = [protein]-peptidylproline (omega=0). In terms of biological role, involved in protein export. Acts as a chaperone by maintaining the newly synthesized protein in an open conformation. Functions as a peptidyl-prolyl cis-trans isomerase. The polypeptide is Trigger factor (Protochlamydia amoebophila (strain UWE25)).